Reading from the N-terminus, the 155-residue chain is Regulatory protein RecX (155 aa).

Belongs to the RecX family.

Its subcellular location is the cytoplasm. Functionally, modulates RecA activity. The polypeptide is Regulatory protein RecX (Vibrio campbellii (strain ATCC BAA-1116)).